The following is a 257-amino-acid chain: Thiazole synthase (257 aa).

The active-site Schiff-base intermediate with DXP is the lysine 99. Residues glycine 160, 186–187 (AG), and 208–209 (NT) each bind 1-deoxy-D-xylulose 5-phosphate.

This sequence belongs to the ThiG family. In terms of assembly, homotetramer. Forms heterodimers with either ThiH or ThiS.

Its subcellular location is the cytoplasm. The enzyme catalyses [ThiS sulfur-carrier protein]-C-terminal-Gly-aminoethanethioate + 2-iminoacetate + 1-deoxy-D-xylulose 5-phosphate = [ThiS sulfur-carrier protein]-C-terminal Gly-Gly + 2-[(2R,5Z)-2-carboxy-4-methylthiazol-5(2H)-ylidene]ethyl phosphate + 2 H2O + H(+). Its pathway is cofactor biosynthesis; thiamine diphosphate biosynthesis. In terms of biological role, catalyzes the rearrangement of 1-deoxy-D-xylulose 5-phosphate (DXP) to produce the thiazole phosphate moiety of thiamine. Sulfur is provided by the thiocarboxylate moiety of the carrier protein ThiS. In vitro, sulfur can be provided by H(2)S. This Thermodesulfovibrio yellowstonii (strain ATCC 51303 / DSM 11347 / YP87) protein is Thiazole synthase.